The following is a 407-amino-acid chain: Arginine deiminase (407 aa).

Cysteine 397 functions as the Amidino-cysteine intermediate in the catalytic mechanism.

Belongs to the arginine deiminase family.

It is found in the cytoplasm. It catalyses the reaction L-arginine + H2O = L-citrulline + NH4(+). It functions in the pathway amino-acid degradation; L-arginine degradation via ADI pathway; carbamoyl phosphate from L-arginine: step 1/2. This Vibrio cholerae serotype O1 (strain ATCC 39541 / Classical Ogawa 395 / O395) protein is Arginine deiminase.